Consider the following 529-residue polypeptide: Alkaline phosphatase, germ cell type (529 aa).

The N-terminal stretch at 1 to 18 (MWGACLLLLGLSLQVCPS) is a signal peptide. Asp60 contributes to the Mg(2+) binding site. Zn(2+)-binding residues include Asp60 and Ser110. The active-site Phosphoserine intermediate is the Ser110. Cys139 and Cys201 are joined by a disulfide. Residue Asn140 is glycosylated (N-linked (GlcNAc...) asparagine). Ser173 is a Mg(2+) binding site. Glu234 serves as a coordination point for Ca(2+). N-linked (GlcNAc...) asparagine glycans are attached at residues Asn267 and Asn277. Ca(2+)-binding residues include Phe287, Glu288, and Asp303. Position 329 (Glu329) interacts with Mg(2+). Positions 334, 338, 375, 376, and 450 each coordinate Zn(2+). A disulfide bond links Cys485 and Cys492. Ser502 is lipidated: GPI-anchor amidated serine. Positions 503–529 (AVSPGYMSTLLCLLAGKMLMLMAAAEP) are cleaved as a propeptide — removed in mature form.

The protein belongs to the alkaline phosphatase family. In terms of assembly, homodimer. Mg(2+) is required as a cofactor. It depends on Zn(2+) as a cofactor. The cofactor is Ca(2+). Embryo and testis.

The protein resides in the cell membrane. The enzyme catalyses a phosphate monoester + H2O = an alcohol + phosphate. Inhibited by L-leucine, EDTA and heat. Alkaline phosphatase that can hydrolyze various phosphate compounds. This is Alkaline phosphatase, germ cell type (Alpg) from Mus musculus (Mouse).